The following is a 508-amino-acid chain: Light-independent protochlorophyllide reductase subunit B (508 aa).

D36 lines the [4Fe-4S] cluster pocket. D282 serves as the catalytic Proton donor. 417–418 (GL) provides a ligand contact to substrate.

The protein belongs to the ChlB/BchB/BchZ family. Protochlorophyllide reductase is composed of three subunits; BchL, BchN and BchB. Forms a heterotetramer of two BchB and two BchN subunits. It depends on [4Fe-4S] cluster as a cofactor.

It carries out the reaction chlorophyllide a + oxidized 2[4Fe-4S]-[ferredoxin] + 2 ADP + 2 phosphate = protochlorophyllide a + reduced 2[4Fe-4S]-[ferredoxin] + 2 ATP + 2 H2O. Its pathway is porphyrin-containing compound metabolism; bacteriochlorophyll biosynthesis (light-independent). In terms of biological role, component of the dark-operative protochlorophyllide reductase (DPOR) that uses Mg-ATP and reduced ferredoxin to reduce ring D of protochlorophyllide (Pchlide) to form chlorophyllide a (Chlide). This reaction is light-independent. The NB-protein (BchN-BchB) is the catalytic component of the complex. In Methylocella silvestris (strain DSM 15510 / CIP 108128 / LMG 27833 / NCIMB 13906 / BL2), this protein is Light-independent protochlorophyllide reductase subunit B.